Reading from the N-terminus, the 455-residue chain is Exodeoxyribonuclease 7 large subunit (455 aa).

The protein belongs to the XseA family. Heterooligomer composed of large and small subunits.

Its subcellular location is the cytoplasm. The enzyme catalyses Exonucleolytic cleavage in either 5'- to 3'- or 3'- to 5'-direction to yield nucleoside 5'-phosphates.. Bidirectionally degrades single-stranded DNA into large acid-insoluble oligonucleotides, which are then degraded further into small acid-soluble oligonucleotides. In Lactobacillus acidophilus (strain ATCC 700396 / NCK56 / N2 / NCFM), this protein is Exodeoxyribonuclease 7 large subunit.